Reading from the N-terminus, the 142-residue chain is ASGGIGEPLSLLLKQSPLISQLALYDIAHVKGVAADLSHIETQAHVTAHLGPGELAECLTGANVVIIPAGLPRKPGMTRDDLFNTNASIVAELIDSCAKNCPKAMICIITNPVNSTVPIAAEILKRHNVYDPKRLFGVTTLD.

Residues 1-6 and Asp-26 contribute to the NAD(+) site; that span reads ASGGIG. Substrate-binding residues include Arg-73 and Arg-79. NAD(+)-binding positions include Asn-86 and 109–111; that span reads ITN. Asn-111 contributes to the substrate binding site.

Belongs to the LDH/MDH superfamily. MDH type 1 family. In terms of assembly, homodimer.

The protein resides in the mitochondrion matrix. It catalyses the reaction (S)-malate + NAD(+) = oxaloacetate + NADH + H(+). This is Malate dehydrogenase, mitochondrial from Schistosoma mansoni (Blood fluke).